Here is a 347-residue protein sequence, read N- to C-terminus: NADH-ubiquinone oxidoreductase chain 2 (347 aa).

11 consecutive transmembrane segments (helical) span residues 1–21 (MNPMIFIILLTTIMLGTFIVT), 25–45 (HWFMTWLGFEMNMMAIVPVLM), 59–79 (YFLTQATASMILMLAIIINLM), 96–116 (MLITIALTMKLGLAPFHFWVP), 122–142 (VSLPSGLILLTWQKIAPLSLL), 149–169 (VNMNILLLMSLLSIMIGGWGG), 178–198 (IMAYSSIAHMGWMMAIMVYNP), 201–221 (SLLNLLIYIFMTSSMFMLLIF), 237–257 (APIITIMSLTTLLSLGGLPPL), 274–294 (NSVILPTLMAILALLNLFFYM), and 326–346 (MLPLITISTLALPLTPMLILL).

This sequence belongs to the complex I subunit 2 family. Core subunit of respiratory chain NADH dehydrogenase (Complex I) which is composed of 45 different subunits. Interacts with TMEM242.

The protein localises to the mitochondrion inner membrane. It catalyses the reaction a ubiquinone + NADH + 5 H(+)(in) = a ubiquinol + NAD(+) + 4 H(+)(out). Core subunit of the mitochondrial membrane respiratory chain NADH dehydrogenase (Complex I) that is believed to belong to the minimal assembly required for catalysis. Complex I functions in the transfer of electrons from NADH to the respiratory chain. The immediate electron acceptor for the enzyme is believed to be ubiquinone. This is NADH-ubiquinone oxidoreductase chain 2 from Crocidura suaveolens gueldenstaedtii (Gueldenstaedt's shrew).